The chain runs to 232 residues: Ubiquinone biosynthesis O-methyltransferase (232 aa).

4 residues coordinate S-adenosyl-L-methionine: Arg-36, Gly-55, Asp-76, and Leu-120.

This sequence belongs to the methyltransferase superfamily. UbiG/COQ3 family.

The enzyme catalyses a 3-demethylubiquinol + S-adenosyl-L-methionine = a ubiquinol + S-adenosyl-L-homocysteine + H(+). The catalysed reaction is a 3-(all-trans-polyprenyl)benzene-1,2-diol + S-adenosyl-L-methionine = a 2-methoxy-6-(all-trans-polyprenyl)phenol + S-adenosyl-L-homocysteine + H(+). The protein operates within cofactor biosynthesis; ubiquinone biosynthesis. Functionally, O-methyltransferase that catalyzes the 2 O-methylation steps in the ubiquinone biosynthetic pathway. The polypeptide is Ubiquinone biosynthesis O-methyltransferase (Pseudomonas fluorescens (strain Pf0-1)).